The following is an 845-amino-acid chain: Nuclear pore complex protein Nup107 (845 aa).

2 disordered regions span residues 1–26 (MADSPFPRSSRSGLLRTTLNSSMPPQ) and 677–702 (QNRPKKPQTSHAASSQDNFTERMASE). Polar residues-rich tracts occupy residues 7-26 (PRSSRSGLLRTTLNSSMPPQ) and 685-694 (TSHAASSQDN).

This sequence belongs to the nucleoporin Nup84/Nup107 family. Part of the nuclear pore complex (NPC). In terms of tissue distribution, expressed in spermatocytes (at protein level).

The protein resides in the nucleus. It localises to the nuclear pore complex. Its subcellular location is the nucleus envelope. The protein localises to the nucleus membrane. It is found in the cytoplasm. The protein resides in the cytoskeleton. It localises to the spindle. Its subcellular location is the chromosome. The protein localises to the nucleus matrix. Functionally, plays a role in nuclear pore complex (NPC) assembly and maintenance. Required for nuclear import of Mad. Mediates the association between the nuclear pore complex and a subset of active chromatin regions adjacent to lamin-associated domains. Plays a role in double strand break repair by relocalizing the heterochromatic double strand breaks (DSBs) to the nuclear periphery as part of the homologous recombination (HR) repair process. Regulates cytokinesis during spermatocyte meiosis by maintaining type-B lamin Lam localization to the spindle envelope. Regulates female gonad development and oogenesis. In Drosophila melanogaster (Fruit fly), this protein is Nuclear pore complex protein Nup107.